Here is a 571-residue protein sequence, read N- to C-terminus: 2-succinyl-5-enolpyruvyl-6-hydroxy-3-cyclohexene-1-carboxylate synthase (571 aa).

This sequence belongs to the TPP enzyme family. MenD subfamily. In terms of assembly, homodimer. Mg(2+) serves as cofactor. The cofactor is Mn(2+). Requires thiamine diphosphate as cofactor.

It carries out the reaction isochorismate + 2-oxoglutarate + H(+) = 5-enolpyruvoyl-6-hydroxy-2-succinyl-cyclohex-3-ene-1-carboxylate + CO2. It participates in quinol/quinone metabolism; 1,4-dihydroxy-2-naphthoate biosynthesis; 1,4-dihydroxy-2-naphthoate from chorismate: step 2/7. The protein operates within quinol/quinone metabolism; menaquinone biosynthesis. Its function is as follows. Catalyzes the thiamine diphosphate-dependent decarboxylation of 2-oxoglutarate and the subsequent addition of the resulting succinic semialdehyde-thiamine pyrophosphate anion to isochorismate to yield 2-succinyl-5-enolpyruvyl-6-hydroxy-3-cyclohexene-1-carboxylate (SEPHCHC). The sequence is that of 2-succinyl-5-enolpyruvyl-6-hydroxy-3-cyclohexene-1-carboxylate synthase from Vibrio parahaemolyticus serotype O3:K6 (strain RIMD 2210633).